The chain runs to 562 residues: NAD-dependent malic enzyme (562 aa).

The active-site Proton donor is tyrosine 101. Residue arginine 154 coordinates NAD(+). Lysine 172 acts as the Proton acceptor in catalysis. Residues glutamate 243, aspartate 244, and aspartate 267 each coordinate a divalent metal cation. 2 residues coordinate NAD(+): aspartate 267 and asparagine 415.

The protein belongs to the malic enzymes family. Homotetramer. It depends on Mg(2+) as a cofactor. Mn(2+) is required as a cofactor.

The catalysed reaction is (S)-malate + NAD(+) = pyruvate + CO2 + NADH. The enzyme catalyses oxaloacetate + H(+) = pyruvate + CO2. This chain is NAD-dependent malic enzyme, found in Shewanella frigidimarina (strain NCIMB 400).